Consider the following 3066-residue polypeptide: Genome polyprotein (3066 aa).

In terms of domain architecture, Peptidase S30 spans Leu-176–Tyr-317. Residues His-230, Glu-239, and Ser-271 each act as for P1 proteinase activity in the active site. Positions Lys-370–Cys-373 match the Involved in interaction with stylet and aphid transmission motif. The Involved in virions binding and aphid transmission signature appears at Pro-626–Lys-628. In terms of domain architecture, Peptidase C6 spans Met-652 to Gly-774. Residues Cys-660 and His-733 each act as for helper component proteinase activity in the active site. Residues Thr-1245–Glu-1397 form the Helicase ATP-binding domain. ATP is bound at residue Gly-1258–Ser-1265. A DECH box motif is present at residues Asp-1347 to His-1350. One can recognise a Helicase C-terminal domain in the interval Asp-1416–Ser-1575. The short motif at Lys-1900–His-1909 is the Nuclear localization signal element. Tyr-1924 is subject to O-(5'-phospho-RNA)-tyrosine. Positions Ser-2046–Asp-2264 constitute a Peptidase C4 domain. Active-site for nuclear inclusion protein A activity residues include His-2091, Asp-2126, and Cys-2196. The RdRp catalytic domain maps to Trp-2530–Tyr-2654. Residues Glu-2797 to Gly-2839 form a disordered region. Residues Ser-2807–Val-2833 show a composition bias toward basic and acidic residues. A Phosphothreonine modification is found at Thr-3048.

This sequence belongs to the potyviridae genome polyprotein family. Interacts with host eIF4E protein (via cap-binding region); this interaction mediates the translation of the VPg-viral RNA conjugates. Part of a complex that comprises VPg, RNA, host EIF4E and EIF4G; this interaction mediates the translation of the VPg-viral RNA conjugates. VPg is uridylylated by the polymerase and is covalently attached to the 5'-end of the genomic RNA. This uridylylated form acts as a nucleotide-peptide primer for the polymerase. In terms of processing, genome polyprotein of potyviruses undergoes post-translational proteolytic processing by the main proteinase NIa-pro resulting in the production of at least ten individual proteins. The P1 proteinase and the HC-pro cleave only their respective C-termini autocatalytically. 6K1 is essential for proper proteolytic separation of P3 from CI.

It is found in the host cytoplasmic vesicle. The protein localises to the host nucleus. It localises to the virion. It catalyses the reaction RNA(n) + a ribonucleoside 5'-triphosphate = RNA(n+1) + diphosphate. It carries out the reaction Hydrolyzes glutaminyl bonds, and activity is further restricted by preferences for the amino acids in P6 - P1' that vary with the species of potyvirus, e.g. Glu-Xaa-Xaa-Tyr-Xaa-Gln-|-(Ser or Gly) for the enzyme from tobacco etch virus. The natural substrate is the viral polyprotein, but other proteins and oligopeptides containing the appropriate consensus sequence are also cleaved.. The enzyme catalyses Hydrolyzes a Gly-|-Gly bond at its own C-terminus, commonly in the sequence -Tyr-Xaa-Val-Gly-|-Gly, in the processing of the potyviral polyprotein.. Required for aphid transmission and also has proteolytic activity. Only cleaves a Gly-Gly dipeptide at its own C-terminus. Interacts with virions and aphid stylets. Acts as a suppressor of RNA-mediated gene silencing, also known as post-transcriptional gene silencing (PTGS), a mechanism of plant viral defense that limits the accumulation of viral RNAs. May have RNA-binding activity. Its function is as follows. Has helicase activity. It may be involved in replication. In terms of biological role, indispensable for virus replication. Reduces the abundance of host transcripts related to jasmonic acid biosynthesis therefore altering the host defenses. In order to increase its own stability, decreases host protein degradation pathways. Functionally, indispensable for virus replication. Mediates the cap-independent, EIF4E-dependent translation of viral genomic RNAs. Binds to the cap-binding site of host EIF4E and thus interferes with the host EIF4E-dependent mRNA export and translation. VPg-RNA directly binds EIF4E and is a template for transcription. Also forms trimeric complexes with EIF4E-EIF4G, which are templates for translation. Its function is as follows. Has RNA-binding and proteolytic activities. In terms of biological role, an RNA-dependent RNA polymerase that plays an essential role in the virus replication. Functionally, involved in aphid transmission, cell-to-cell and systemis movement, encapsidation of the viral RNA and in the regulation of viral RNA amplification. The sequence is that of Genome polyprotein from Bean common mosaic necrosis virus (strain NL-3) (BCMNV).